The sequence spans 310 residues: Methionyl-tRNA formyltransferase (310 aa).

(6S)-5,6,7,8-tetrahydrofolate is bound at residue 109–112; that stretch reads SLLP.

Belongs to the Fmt family.

It catalyses the reaction L-methionyl-tRNA(fMet) + (6R)-10-formyltetrahydrofolate = N-formyl-L-methionyl-tRNA(fMet) + (6S)-5,6,7,8-tetrahydrofolate + H(+). Its function is as follows. Attaches a formyl group to the free amino group of methionyl-tRNA(fMet). The formyl group appears to play a dual role in the initiator identity of N-formylmethionyl-tRNA by promoting its recognition by IF2 and preventing the misappropriation of this tRNA by the elongation apparatus. This is Methionyl-tRNA formyltransferase from Alkaliphilus oremlandii (strain OhILAs) (Clostridium oremlandii (strain OhILAs)).